The primary structure comprises 394 residues: NAD(P)H-quinone oxidoreductase subunit H (394 aa).

This sequence belongs to the complex I 49 kDa subunit family. NDH-1 can be composed of about 15 different subunits; different subcomplexes with different compositions have been identified which probably have different functions.

Its subcellular location is the cellular thylakoid membrane. The enzyme catalyses a plastoquinone + NADH + (n+1) H(+)(in) = a plastoquinol + NAD(+) + n H(+)(out). It carries out the reaction a plastoquinone + NADPH + (n+1) H(+)(in) = a plastoquinol + NADP(+) + n H(+)(out). Its function is as follows. NDH-1 shuttles electrons from an unknown electron donor, via FMN and iron-sulfur (Fe-S) centers, to quinones in the respiratory and/or the photosynthetic chain. The immediate electron acceptor for the enzyme in this species is believed to be plastoquinone. Couples the redox reaction to proton translocation, and thus conserves the redox energy in a proton gradient. Cyanobacterial NDH-1 also plays a role in inorganic carbon-concentration. The polypeptide is NAD(P)H-quinone oxidoreductase subunit H (Synechococcus sp. (strain CC9311)).